A 309-amino-acid chain; its full sequence is Porphobilinogen deaminase (309 aa).

Cys242 carries the S-(dipyrrolylmethanemethyl)cysteine modification.

This sequence belongs to the HMBS family. As to quaternary structure, monomer. The cofactor is dipyrromethane.

It carries out the reaction 4 porphobilinogen + H2O = hydroxymethylbilane + 4 NH4(+). Its pathway is porphyrin-containing compound metabolism; protoporphyrin-IX biosynthesis; coproporphyrinogen-III from 5-aminolevulinate: step 2/4. In terms of biological role, tetrapolymerization of the monopyrrole PBG into the hydroxymethylbilane pre-uroporphyrinogen in several discrete steps. The sequence is that of Porphobilinogen deaminase from Legionella pneumophila subsp. pneumophila (strain Philadelphia 1 / ATCC 33152 / DSM 7513).